A 1358-amino-acid chain; its full sequence is DNA-directed RNA polymerase subunit beta (1358 aa).

Residues 1033–1051 (QGLEDRKKEHEARFDDKKG) show a composition bias toward basic and acidic residues. The segment at 1033 to 1053 (QGLEDRKKEHEARFDDKKGKL) is disordered.

It belongs to the RNA polymerase beta chain family. As to quaternary structure, the RNAP catalytic core consists of 2 alpha, 1 beta, 1 beta' and 1 omega subunit. When a sigma factor is associated with the core the holoenzyme is formed, which can initiate transcription.

The catalysed reaction is RNA(n) + a ribonucleoside 5'-triphosphate = RNA(n+1) + diphosphate. Functionally, DNA-dependent RNA polymerase catalyzes the transcription of DNA into RNA using the four ribonucleoside triphosphates as substrates. The polypeptide is DNA-directed RNA polymerase subunit beta (Marinobacter nauticus (strain ATCC 700491 / DSM 11845 / VT8) (Marinobacter aquaeolei)).